The following is a 383-amino-acid chain: tRNA-specific 2-thiouridylase MnmA (383 aa).

Residues 9–16 (GMSGGVDS) and methionine 35 contribute to the ATP site. Residues 95–97 (NPD) are interaction with target base in tRNA. Cysteine 100 (nucleophile) is an active-site residue. Residues cysteine 100 and cysteine 198 are joined by a disulfide bond. Residue glycine 124 participates in ATP binding. Positions 148–150 (KDQ) are interaction with tRNA. Catalysis depends on cysteine 198, which acts as the Cysteine persulfide intermediate. The tract at residues 310–311 (RY) is interaction with tRNA.

Belongs to the MnmA/TRMU family.

It localises to the cytoplasm. The catalysed reaction is S-sulfanyl-L-cysteinyl-[protein] + uridine(34) in tRNA + AH2 + ATP = 2-thiouridine(34) in tRNA + L-cysteinyl-[protein] + A + AMP + diphosphate + H(+). Its function is as follows. Catalyzes the 2-thiolation of uridine at the wobble position (U34) of tRNA, leading to the formation of s(2)U34. The sequence is that of tRNA-specific 2-thiouridylase MnmA from Paraburkholderia phytofirmans (strain DSM 17436 / LMG 22146 / PsJN) (Burkholderia phytofirmans).